Consider the following 223-residue polypeptide: Sigma non-opioid intracellular receptor 1 (223 aa).

The Lumenal segment spans residues 1–7; it reads MAVLSSR. The chain crosses the membrane as a helical span at residues 8 to 29; the sequence is AMRAALGLAVLAVVIQLLRTWL. The Cytoplasmic segment spans residues 30 to 223; it reads SSKSYLFNQK…HTYLSELGLS (194 aa). Residues 98-105 are important for ligand-binding; sequence SLTEYILL. Positions 176 to 223 are C-terminal hydrophobic region; that stretch reads FIPSTMGFALADTIFSTQDFCTLFYTFRIYARCLLLETHTYLSELGLS.

The protein belongs to the ERG2 family. In terms of assembly, homotrimer.

The protein resides in the nucleus inner membrane. The protein localises to the nucleus outer membrane. Its subcellular location is the nucleus envelope. It is found in the cytoplasmic vesicle. It localises to the endoplasmic reticulum membrane. The protein resides in the membrane. Its function is as follows. May function in lipid transport from the endoplasmic reticulum and be involved in a wide array of cellular functions probably through regulation of the biogenesis of lipid microdomains at the plasma membrane. May regulate calcium efflux at the endoplasmic reticulum. In Taricha granulosa (Roughskin newt), this protein is Sigma non-opioid intracellular receptor 1 (SIGMAR1).